Consider the following 148-residue polypeptide: Large ribosomal subunit protein bL9 (148 aa).

Belongs to the bacterial ribosomal protein bL9 family.

In terms of biological role, binds to the 23S rRNA. This chain is Large ribosomal subunit protein bL9, found in Coprothermobacter proteolyticus (strain ATCC 35245 / DSM 5265 / OCM 4 / BT).